We begin with the raw amino-acid sequence, 444 residues long: MWLFTVNQVLRKMQRRHSSNTDNIPPERNRSQALSSEASVDEGGVFESLKAEAASPPALFSGLSGSLPTSSFPSSLVLGSSAGGGDVFIQMPASREEGGGRGEGGAYHHRQPHHHFHHGGHRGGSLLQHVGGDHRGHSEEGGDEQPGTPAPALSELKAVICWLQKGLPFILILLAKLCFQHKLGIAVCIGMASTFAYANSTLREQVSLKEKRSVLVILWILAFLAGNTLYVLYTFSSQQLYNSLIFLKPNLEMLDFFDLLWIVGIADFVLKYITIALKCLIVALPKIILAVKSKGKFYLVIEELSQLFRSLVPIQLWYKYIMGDDSSNSYFLGGVLIVLYSLCKSFDICGRVGGVRKALKLLCTSQNYGVRATGQQCTEAGDICAICQAEFREPLILLCQHVFCEECLCLWLDRERTCPLCRSVAVDTLRCWKDGATSAHFQVY.

At 1–181 the chain is on the extracellular side; it reads MWLFTVNQVL…ILLAKLCFQH (181 aa). Disordered stretches follow at residues 13-41 and 92-149; these read MQRRHSSNTDNIPPERNRSQALSSEASVD and PASR…PGTP. Over residues 107 to 121 the composition is skewed to basic residues; sequence YHHRQPHHHFHHGGH. A compositionally biased stretch (basic and acidic residues) spans 131 to 140; sequence GGDHRGHSEE. The chain crosses the membrane as a helical span at residues 182-202; that stretch reads KLGIAVCIGMASTFAYANSTL. Residues 203–214 lie on the Cytoplasmic side of the membrane; sequence REQVSLKEKRSV. The helical transmembrane segment at 215–235 threads the bilayer; that stretch reads LVILWILAFLAGNTLYVLYTF. Residues 236 to 255 lie on the Extracellular side of the membrane; that stretch reads SSQQLYNSLIFLKPNLEMLD. The helical transmembrane segment at 256–276 threads the bilayer; the sequence is FFDLLWIVGIADFVLKYITIA. Residues 277–329 are Cytoplasmic-facing; it reads LKCLIVALPKIILAVKSKGKFYLVIEELSQLFRSLVPIQLWYKYIMGDDSSNS. Residues 330–350 traverse the membrane as a helical segment; that stretch reads YFLGGVLIVLYSLCKSFDICG. The Extracellular segment spans residues 351–444; sequence RVGGVRKALK…GATSAHFQVY (94 aa). The segment at 384 to 422 adopts an RING-type zinc-finger fold; that stretch reads CAICQAEFREPLILLCQHVFCEECLCLWLDRERTCPLCR.

The protein resides in the membrane. In terms of biological role, E3 ubiquitin-protein ligase that negatively regulates IL3-dependent cellular responses through IL3RA ubiquitination and degradation by the proteasome, having an anti-inflammatory effect. This chain is E3 ubiquitin-protein ligase RNFT2, found in Homo sapiens (Human).